The following is a 451-amino-acid chain: UDP-N-acetylmuramoylalanine--D-glutamate ligase (451 aa).

118–124 is a binding site for ATP; it reads GSNGKTT.

It belongs to the MurCDEF family.

The protein localises to the cytoplasm. It catalyses the reaction UDP-N-acetyl-alpha-D-muramoyl-L-alanine + D-glutamate + ATP = UDP-N-acetyl-alpha-D-muramoyl-L-alanyl-D-glutamate + ADP + phosphate + H(+). It participates in cell wall biogenesis; peptidoglycan biosynthesis. Functionally, cell wall formation. Catalyzes the addition of glutamate to the nucleotide precursor UDP-N-acetylmuramoyl-L-alanine (UMA). This Shouchella clausii (strain KSM-K16) (Alkalihalobacillus clausii) protein is UDP-N-acetylmuramoylalanine--D-glutamate ligase.